Reading from the N-terminus, the 1088-residue chain is DNA polymerase II large subunit (1088 aa).

Belongs to the archaeal DNA polymerase II family. In terms of assembly, heterodimer of a large subunit and a small subunit.

The catalysed reaction is DNA(n) + a 2'-deoxyribonucleoside 5'-triphosphate = DNA(n+1) + diphosphate. It carries out the reaction Exonucleolytic cleavage in the 3'- to 5'-direction to yield nucleoside 5'-phosphates.. Its function is as follows. Possesses two activities: a DNA synthesis (polymerase) and an exonucleolytic activity that degrades single-stranded DNA in the 3'- to 5'-direction. Has a template-primer preference which is characteristic of a replicative DNA polymerase. The sequence is that of DNA polymerase II large subunit (polC) from Thermoplasma volcanium (strain ATCC 51530 / DSM 4299 / JCM 9571 / NBRC 15438 / GSS1).